A 299-amino-acid chain; its full sequence is Ribosomal RNA small subunit methyltransferase H (299 aa).

Residues 35–37 (GGH), aspartate 54, tyrosine 80, aspartate 101, and glutamine 108 each bind S-adenosyl-L-methionine.

This sequence belongs to the methyltransferase superfamily. RsmH family.

The protein resides in the cytoplasm. It catalyses the reaction cytidine(1402) in 16S rRNA + S-adenosyl-L-methionine = N(4)-methylcytidine(1402) in 16S rRNA + S-adenosyl-L-homocysteine + H(+). Functionally, specifically methylates the N4 position of cytidine in position 1402 (C1402) of 16S rRNA. This is Ribosomal RNA small subunit methyltransferase H from Coprothermobacter proteolyticus (strain ATCC 35245 / DSM 5265 / OCM 4 / BT).